The sequence spans 278 residues: Envelope glycoprotein L (278 aa).

The N-terminal stretch at 1-30 is a signal peptide; that stretch reads MCRRPDCGFSFSPGPVVLLWCCLLLPIVSS. Residues 43-256 enclose the gL betaherpesvirus-type domain; that stretch reads VPAECPELTR…DKYYAGLPPE (214 aa). An intrachain disulfide couples Cys-154 to Cys-159.

Belongs to the herpesviridae glycoprotein L (gL) family. Betaherpesvirinae gL subfamily. In terms of assembly, interacts with glycoprotein H (gH); this interaction is necessary for the correct processing and cell surface expression of gH. Forms the envelope pentamer complex (PC) composed of gH, gL, UL128, UL130, and UL131A. The pentamer interacts with host NRP2. Forms the envelope trimer complex composed of gH, gL, and gO. The trimer interacts with host PDGFRA. The trimer also interacts with host EPHA2.

The protein resides in the virion membrane. It is found in the host cell membrane. Its subcellular location is the host Golgi apparatus. It localises to the host trans-Golgi network. In terms of biological role, the heterodimer glycoprotein H-glycoprotein L is required for the fusion of viral and plasma membranes leading to virus entry into the host cell. Acts as a functional inhibitor of gH and maintains gH in an inhibited form. Upon binding to host integrins, gL dissociates from gH leading to activation of the viral fusion glycoproteins gB and gH. In human cytomegalovirus, forms two distincts complexes to mediate viral entry, a trimer and a pentamer at the surface of the virion envelope. The gH-gL-gO trimer is required for infection in fibroblasts by interacting with host PDGFRA, and in glioblastoma cells by interacting with host EPHA2. The gH-gL-UL128-UL130-UL131A pentamer is essential for viral entry in epithelial, endothelial and myeloid cells via interaction with host NRP2. The polypeptide is Envelope glycoprotein L (Homo sapiens (Human)).